Reading from the N-terminus, the 88-residue chain is UPF0297 protein BT9727_4120 (88 aa).

It belongs to the UPF0297 family.

The chain is UPF0297 protein BT9727_4120 from Bacillus thuringiensis subsp. konkukian (strain 97-27).